A 529-amino-acid polypeptide reads, in one-letter code: uncharacterized protein (529 aa).

The 254-residue stretch at 157 to 410 (DFPHIICEIE…FKNRVRENID (254 aa)) folds into the Radical SAM core domain. [4Fe-4S] cluster contacts are provided by Cys-171, Cys-176, and Cys-179.

It depends on [4Fe-4S] cluster as a cofactor.

This is an uncharacterized protein from Archaeoglobus fulgidus (strain ATCC 49558 / DSM 4304 / JCM 9628 / NBRC 100126 / VC-16).